Reading from the N-terminus, the 294-residue chain is Shikimate dehydrogenase (NADP(+)) (294 aa).

Residues 22-24 and S69 contribute to the shikimate site; that span reads SLS. K73 (proton acceptor) is an active-site residue. 2 residues coordinate shikimate: N94 and D111. Residues 135–139 and L236 contribute to the NADP(+) site; that span reads GAGGA. Residue Y238 coordinates shikimate. Residue G260 coordinates NADP(+).

Belongs to the shikimate dehydrogenase family. Homodimer.

It carries out the reaction shikimate + NADP(+) = 3-dehydroshikimate + NADPH + H(+). The protein operates within metabolic intermediate biosynthesis; chorismate biosynthesis; chorismate from D-erythrose 4-phosphate and phosphoenolpyruvate: step 4/7. Involved in the biosynthesis of the chorismate, which leads to the biosynthesis of aromatic amino acids. Catalyzes the reversible NADPH linked reduction of 3-dehydroshikimate (DHSA) to yield shikimate (SA). The protein is Shikimate dehydrogenase (NADP(+)) of Streptococcus equi subsp. zooepidemicus (strain H70).